The sequence spans 458 residues: UDP-N-acetylmuramate--L-alanine ligase (458 aa).

An ATP-binding site is contributed by 112-118 (GMHGKTT).

The protein belongs to the MurCDEF family.

The protein resides in the cytoplasm. The catalysed reaction is UDP-N-acetyl-alpha-D-muramate + L-alanine + ATP = UDP-N-acetyl-alpha-D-muramoyl-L-alanine + ADP + phosphate + H(+). It participates in cell wall biogenesis; peptidoglycan biosynthesis. Its function is as follows. Cell wall formation. The sequence is that of UDP-N-acetylmuramate--L-alanine ligase from Acidobacterium capsulatum (strain ATCC 51196 / DSM 11244 / BCRC 80197 / JCM 7670 / NBRC 15755 / NCIMB 13165 / 161).